A 382-amino-acid polypeptide reads, in one-letter code: Na(+)/H(+) antiporter NhaA (382 aa).

Helical transmembrane passes span 14 to 34, 49 to 69, 87 to 107, 117 to 137, 146 to 166, 171 to 191, 205 to 225, 247 to 267, 285 to 305, 321 to 341, and 356 to 376; these read AGGI…NSSF, MSVS…LIGL, IFPA…YVAF, GWAI…ALLG, VFLL…IAFF, LSVL…LLNS, FILW…GVVL, ALHP…NAGI, VALG…YVAV, IFAV…ISSL, and LGIL…LHIS.

This sequence belongs to the NhaA Na(+)/H(+) (TC 2.A.33) antiporter family.

It is found in the cell inner membrane. The catalysed reaction is Na(+)(in) + 2 H(+)(out) = Na(+)(out) + 2 H(+)(in). Its function is as follows. Na(+)/H(+) antiporter that extrudes sodium in exchange for external protons. The protein is Na(+)/H(+) antiporter NhaA of Aliivibrio salmonicida (strain LFI1238) (Vibrio salmonicida (strain LFI1238)).